We begin with the raw amino-acid sequence, 204 residues long: Viral interleukin-6 homolog (204 aa).

The signal sequence occupies residues 1-22 (MRWFKLWSILLVGSLLVSGTRG).

Belongs to the IL-6 superfamily. As to quaternary structure, interacts with host IL6ST.

Initiates signal transduction through binding to interleukin-6 receptor subunit beta IL6ST, independently of the cognate IL6 receptor IL6R. In infected primary effusion lymphoma cells, promotes proliferation of cells, protects them from apoptosis, and promotes immune evasion of interferon activity. Also drives blood to lymphatic endothelial cell differentiation. The polypeptide is Viral interleukin-6 homolog (K2) (Homo sapiens (Human)).